A 275-amino-acid chain; its full sequence is MTDDKDVLRDVWFGRIPTCFTLCQDEITEREAEPYYLLLPRVSYLTLVTDKVKKHFQKVMRQEDISEIWFEYEGTPLKWHYPIGLLFDLLASSSALPWNITVHFKSFPEKDLLHCPSKDAIEAHFMSCMKEADALKHKSQVINEMQKKDHKQLWMGLQNDRFDQFWAINRKLMEYPAEENGFRYIPFRIYQTTTERPFIQKLFRPVAADGQLHTLGDLLKEVCPSAVDPEDGEKKNQVMIHGIEPMLETPLQWLSEHLSYPDNFLHISIIPQPTD.

The residue at position 1 (Met1) is an N-acetylmethionine. A Glycyl lysine isopeptide (Lys-Gly) (interchain with G-Cter in ATG12) cross-link involves residue Lys130.

The protein belongs to the ATG5 family. As to quaternary structure, forms a conjugate with ATG12. Part of the minor complex composed of 4 sets of ATG12-ATG5 and ATG16L1 (400 kDa); this complex interacts with ATG3 leading to disruption of ATG7 interaction and promotion of ATG8-like proteins lipidation. Forms an 800-kDa complex composed of ATG12-ATG5 and ATG16L2. The ATG12-ATG5 conjugate interacts with RAB33A; this interaction is bridged by ATG16L1 and promotes ATG12-ATG5-ATG16L1 complex recruitment to phagophores. Interacts with TECPR1; the interaction is direct and does not take place when ATG16L1 is associated with the ATG5-ATG12 conjugate. Interacts with DHX58/RIG-1, IFIH1/MDA5 and MAVS/IPS-1 in monomeric form as well as in ATG12-ATG5 conjugate form. The interaction with MAVS is further enhanced upon vesicular stomatitis virus (VSV) infection. Interacts with ATG3. Interacts with ATG7 and ATG10. Interacts with FADD. Interacts with Bassoon/BSN; this interaction is important for the regulation of presynaptic autophagy. Interacts with ATG16L2. Post-translationally, conjugated to ATG12; which is essential for autophagy, but is not required for association with isolation membrane. In terms of processing, acetylated by EP300.

The protein resides in the cytoplasm. Its subcellular location is the preautophagosomal structure membrane. Involved in autophagic vesicle formation. Conjugation with ATG12, through a ubiquitin-like conjugating system involving ATG7 as an E1-like activating enzyme and ATG10 as an E2-like conjugating enzyme, is essential for its function. The ATG12-ATG5 conjugate acts as an E3-like enzyme which is required for lipidation of ATG8 family proteins and their association to the vesicle membranes. Involved in mitochondrial quality control after oxidative damage, and in subsequent cellular longevity. Plays a critical role in multiple aspects of lymphocyte development and is essential for both B and T lymphocyte survival and proliferation. Required for optimal processing and presentation of antigens for MHC II. Involved in the maintenance of axon morphology and membrane structures, as well as in normal adipocyte differentiation. Promotes primary ciliogenesis through removal of OFD1 from centriolar satellites and degradation of IFT20 via the autophagic pathway. As part of the ATG8 conjugation system with ATG12 and ATG16L1, required for recruitment of LRRK2 to stressed lysosomes and induction of LRRK2 kinase activity in response to lysosomal stress. Its function is as follows. May play an important role in the apoptotic process, possibly within the modified cytoskeleton. Its expression is a relatively late event in the apoptotic process, occurring downstream of caspase activity. Plays a crucial role in IFN-gamma-induced autophagic cell death by interacting with FADD. The protein is Autophagy protein 5 of Pongo abelii (Sumatran orangutan).